A 457-amino-acid polypeptide reads, in one-letter code: Siroheme synthase (457 aa).

A precorrin-2 dehydrogenase /sirohydrochlorin ferrochelatase region spans residues 1–204; it reads MDHLPIFCQL…NDQKAITETT (204 aa). NAD(+) is bound by residues 22–23 and 43–44; these read DV and LA. At Ser-128 the chain carries Phosphoserine. Residues 216–457 are uroporphyrinogen-III C-methyltransferase; sequence GEVVLVGAGP…RDKLNWFSNH (242 aa). Pro-225 serves as a coordination point for S-adenosyl-L-methionine. Asp-248 functions as the Proton acceptor in the catalytic mechanism. Lys-270 acts as the Proton donor in catalysis. S-adenosyl-L-methionine-binding positions include 301-303, Ile-306, 331-332, Met-382, and Gly-411; these read GGD and TA.

The protein in the N-terminal section; belongs to the precorrin-2 dehydrogenase / sirohydrochlorin ferrochelatase family. It in the C-terminal section; belongs to the precorrin methyltransferase family.

It carries out the reaction uroporphyrinogen III + 2 S-adenosyl-L-methionine = precorrin-2 + 2 S-adenosyl-L-homocysteine + H(+). It catalyses the reaction precorrin-2 + NAD(+) = sirohydrochlorin + NADH + 2 H(+). The enzyme catalyses siroheme + 2 H(+) = sirohydrochlorin + Fe(2+). Its pathway is cofactor biosynthesis; adenosylcobalamin biosynthesis; precorrin-2 from uroporphyrinogen III: step 1/1. The protein operates within cofactor biosynthesis; adenosylcobalamin biosynthesis; sirohydrochlorin from precorrin-2: step 1/1. It participates in porphyrin-containing compound metabolism; siroheme biosynthesis; precorrin-2 from uroporphyrinogen III: step 1/1. It functions in the pathway porphyrin-containing compound metabolism; siroheme biosynthesis; siroheme from sirohydrochlorin: step 1/1. Its pathway is porphyrin-containing compound metabolism; siroheme biosynthesis; sirohydrochlorin from precorrin-2: step 1/1. Its function is as follows. Multifunctional enzyme that catalyzes the SAM-dependent methylations of uroporphyrinogen III at position C-2 and C-7 to form precorrin-2 via precorrin-1. Then it catalyzes the NAD-dependent ring dehydrogenation of precorrin-2 to yield sirohydrochlorin. Finally, it catalyzes the ferrochelation of sirohydrochlorin to yield siroheme. This chain is Siroheme synthase, found in Escherichia coli (strain 55989 / EAEC).